The sequence spans 1099 residues: 1-phosphatidylinositol 4,5-bisphosphate phosphodiesterase 1 (1099 aa).

Residues 1-10 are compositionally biased toward basic and acidic residues; sequence MLESLNRRNS. Disordered stretches follow at residues 1 to 109 and 128 to 164; these read MLES…SSTT and ESRS…KSIQ. Low complexity-rich tracts occupy residues 43 to 66 and 86 to 109; these read PPKS…KSDL and PKQQ…SSTT. Residues 131 to 141 show a composition bias toward polar residues; the sequence is SIVSNNGGSPM. A compositionally biased stretch (low complexity) spans 142–155; the sequence is SDSTTVTSTLSTDT. The PI-PLC X-box domain occupies 566–726; sequence YDYPLNEYFI…LKHKFIIKVK (161 aa). Catalysis depends on residues His-579 and His-642. Substrate-binding residues include Lys-724 and Lys-726. Residues 742–780 are disordered; it reads FTTSTTTTTTTTTTTTTATSLSEDNENNKSNSSSTSSFI. Residues 743–778 are compositionally biased toward low complexity; that stretch reads TTSTTTTTTTTTTTTTATSLSEDNENNKSNSSSTSS. A PI-PLC Y-box domain is found at 794 to 912; sequence ELSNLGIYTQ…GYVLKPSVLR (119 aa). Ser-823 and Arg-852 together coordinate substrate. One can recognise a C2 domain in the interval 917-1071; it reads KSSSSNVDTR…QGYRYIYLND (155 aa).

The enzyme catalyses a 1,2-diacyl-sn-glycero-3-phospho-(1D-myo-inositol-4,5-bisphosphate) + H2O = 1D-myo-inositol 1,4,5-trisphosphate + a 1,2-diacyl-sn-glycerol + H(+). Its function is as follows. The production of the second messenger molecules diacylglycerol (DAG) and inositol 1,4,5-trisphosphate (IP3) is mediated by activated phosphatidylinositol-specific phospholipase C enzymes. The protein is 1-phosphatidylinositol 4,5-bisphosphate phosphodiesterase 1 (PLC1) of Candida albicans (Yeast).